Here is a 592-residue protein sequence, read N- to C-terminus: Monocopper oxidase-like protein SKS2 (592 aa).

An N-terminal signal peptide occupies residues 1–23 (MAATDFFFAFVFSFALIFGFSFA). Residues asparagine 61, asparagine 110, asparagine 172, asparagine 203, asparagine 259, asparagine 280, asparagine 295, asparagine 344, asparagine 364, asparagine 433, and asparagine 447 are each glycosylated (N-linked (GlcNAc...) asparagine). Residue histidine 455 coordinates Cu cation. Residues asparagine 476 and asparagine 536 are each glycosylated (N-linked (GlcNAc...) asparagine). Serine 564 is lipidated: GPI-anchor amidated serine. Positions 565–592 (ATKSMTNGQLILIFSMMMVLLSSFSSFC) are cleaved as a propeptide — removed in mature form.

The protein belongs to the multicopper oxidase family. The cofactor is Cu cation.

Its subcellular location is the cell membrane. This is Monocopper oxidase-like protein SKS2 (SKS2) from Arabidopsis thaliana (Mouse-ear cress).